Here is a 238-residue protein sequence, read N- to C-terminus: Probable transcriptional regulatory protein Sde_1551 (238 aa).

This sequence belongs to the TACO1 family.

It is found in the cytoplasm. The chain is Probable transcriptional regulatory protein Sde_1551 from Saccharophagus degradans (strain 2-40 / ATCC 43961 / DSM 17024).